Consider the following 344-residue polypeptide: Methionine aminopeptidase 1C, chloroplastic/mitochondrial (344 aa).

Residue histidine 172 coordinates substrate. A divalent metal cation is bound by residues aspartate 189, aspartate 200, and histidine 262. Substrate is bound at residue histidine 269. A divalent metal cation-binding residues include glutamate 296 and glutamate 327.

This sequence belongs to the peptidase M24A family. Methionine aminopeptidase type 1 subfamily. Requires Co(2+) as cofactor. It depends on Zn(2+) as a cofactor. Mn(2+) serves as cofactor. The cofactor is Fe(2+). In terms of tissue distribution, ubiquitous.

It localises to the plastid. Its subcellular location is the chloroplast. The protein localises to the mitochondrion. The enzyme catalyses Release of N-terminal amino acids, preferentially methionine, from peptides and arylamides.. Removes the N-terminal methionine from nascent proteins. The N-terminal methionine is often cleaved when the second residue in the primary sequence is small and uncharged (Met-Ala-, Cys, Gly, Pro, Ser, Thr, or Val). The chain is Methionine aminopeptidase 1C, chloroplastic/mitochondrial (MAP1C) from Arabidopsis thaliana (Mouse-ear cress).